A 632-amino-acid polypeptide reads, in one-letter code: Sporulenol synthase (632 aa).

Asp377 serves as the catalytic Proton donor. 3 PFTB repeats span residues 395-436, 465-505, and 513-554; these read WERG…EDAA, IQRA…HACG, and IQKA…VQTA.

It belongs to the terpene cyclase/mutase family.

It localises to the cell membrane. It catalyses the reaction sporulenol = (R)-tetraprenyl-beta-curcumene + H2O. Its pathway is secondary metabolite biosynthesis; hopanoid biosynthesis. Catalyzes the cyclization of tetraprenyl beta-curcumene into sporulenol. This is Sporulenol synthase (sqhC) from Bacillus subtilis (strain 168).